We begin with the raw amino-acid sequence, 1386 residues long: DNA-directed RNA polymerase subunit beta (1386 aa).

This sequence belongs to the RNA polymerase beta chain family. As to quaternary structure, in plastids the minimal PEP RNA polymerase catalytic core is composed of four subunits: alpha, beta, beta', and beta''. When a (nuclear-encoded) sigma factor is associated with the core the holoenzyme is formed, which can initiate transcription.

The protein resides in the plastid. The protein localises to the chloroplast. It catalyses the reaction RNA(n) + a ribonucleoside 5'-triphosphate = RNA(n+1) + diphosphate. DNA-dependent RNA polymerase catalyzes the transcription of DNA into RNA using the four ribonucleoside triphosphates as substrates. The polypeptide is DNA-directed RNA polymerase subunit beta (Thalassiosira pseudonana (Marine diatom)).